We begin with the raw amino-acid sequence, 1278 residues long: Sterol regulatory element-binding protein cleavage-activating protein (1278 aa).

Over 1–18 (MTLTERLREKISQAFYNH) the chain is Cytoplasmic. The chain crosses the membrane as a helical span at residues 19–39 (GLFCASYPIPIILFTGLCILA). Residues 40–279 (CCYPLLKLPL…SLVHVHFKEE (240 aa)) lie on the Lumenal side of the membrane. Positions 46-284 (KLPLPGTGPV…HFKEEIGIAE (239 aa)) are loop-1. The tract at residues 60-80 (PVKDYSPPPLTSDHKPGEPNE) is disordered. N-linked (GlcNAc...) asparagine glycosylation is present at Asn-263. Residues 280 to 300 (IGIAELIPLVTTYIILFAYIY) form a helical membrane-spanning segment. The SSD domain maps to 284–442 (ELIPLVTTYI…MLFFTTVLSI (159 aa)). At 301-312 (FSTRKIDMVKSK) the chain is on the cytoplasmic side. The helical transmembrane segment at 313-333 (WGLALAAVVTVLSSLLMSVGL) threads the bilayer. Topologically, residues 334-344 (CTLFGLTPTLN) are lumenal. The chain crosses the membrane as a helical span at residues 345 to 365 (GGEIFPYLVVVIGLENVLVLT). At 366-401 (KSVVSTPVDLEVKLRIAQGLSSESWSIMKNMATELG) the chain is on the cytoplasmic side. The helical transmembrane segment at 402–422 (IVLIGYFTLVPAIQEFCLFAV) threads the bilayer. Position 423 (Val-423) is a topological domain, lumenal. The chain crosses the membrane as a helical span at residues 424 to 444 (GLVSDFFLQMLFFTTVLSIDI). Over 445–518 (RRMELADLNK…FLARTRLAQR (74 aa)) the chain is Cytoplasmic. An ER export signal motif is present at residues 447–452 (MELADL). Residues Lys-454 and Lys-466 each participate in a glycyl lysine isopeptide (Lys-Gly) (interchain with G-Cter in ubiquitin) cross-link. Residues 519–539 (LIMAGTVVWIGILVYTDPAGL) form a helical membrane-spanning segment. Residues 535-710 (DPAGLRTYLA…QAQRDLTLYK (176 aa)) are loop-7. At 540 to 707 (RTYLAAQVTE…GTAQAQRDLT (168 aa)) the chain is on the lumenal side. Positions 581–618 (PPDASKLPENQTLPGEPPEPGGLAEGVHDSPAPEVTWG) are disordered. 2 N-linked (GlcNAc...) asparagine glycosylation sites follow: Asn-590 and Asn-641. The tract at residues 668-696 (EGRHPQDGRSAWPPPRPGQGGLWEAGPKG) is disordered. A helical transmembrane segment spans residues 708-728 (LYKVAALGLASGIVLVLLLLC). Residues 729–1278 (LYRVLCPRNY…YVPSVLEKLD (550 aa)) lie on the Cytoplasmic side of the membrane. Positions 731–1278 (RVLCPRNYGQ…YVPSVLEKLD (548 aa)) are interaction with SREBF2. A WD 1 repeat occupies 771–811 (VLRGHLMDIECLASDGMLLVSCCLAGHVCVWDAQTGDCLTR). Phosphoserine occurs at positions 821, 837, 850, 905, and 935. A disordered region spans residues 834-904 (ERLSDGGKGG…RYRAGRRAQD (71 aa)). WD repeat units follow at residues 951-1001 (PPEK…LRCS) and 1004-1041 (EVSS…ALSP). At Arg-1050 the chain carries Omega-N-methylarginine. 4 WD repeats span residues 1076–1113 (AHQK…CLFT), 1116–1154 (GHSG…RVSH), 1157–1194 (AHRG…KLYS), and 1196–1234 (QQDL…LLQT).

Belongs to the WD repeat SCAP family. In terms of assembly, membrane region forms a homotetramer. Component of the SCAP-SREBP complex (composed of SCAP and SREBF1/SREBP1 or SREBF2/SREBP2); interacts with SREBF1/SREBP1 or SREBF2/SREBP2 through its C-terminal cytoplasmic domain. Forms a ternary complex with INSIG1 or INSIG2 through its transmembrane domains at high sterol concentrations. Interacts with PAQR3; the interaction anchors the SCAP-SREBP complex to the Golgi apparatus in low cholesterol conditions. Interacts with the SEC23-SEC24 complex in a SAR1-GTP-dependent manner through an ER export signal in its third cytoplasmic loop. Interacts with RNF139; the interaction inhibits the interaction of SCAP with SEC24B and hampering the ER to Golgi transport of the SCAP-SREBP complex. Interacts with SPRING1. In terms of processing, ubiquitinated at Lys-454 and Lys-466. RNF145 triggers ubiquitination of SCAP, likely inhibiting SCAP-SREBP complex transport to the Golgi apparatus and the subsequent processing/maturation of SREBF2/SREBP2.

The protein resides in the endoplasmic reticulum membrane. It localises to the golgi apparatus membrane. The protein localises to the cytoplasmic vesicle. Its subcellular location is the COPII-coated vesicle membrane. Escort protein required for cholesterol as well as lipid homeostasis. Regulates export of the SCAP-SREBP complex from the endoplasmic reticulum to the Golgi upon low cholesterol, thereby regulating the processing of sterol regulatory element-binding proteins (SREBPs) SREBF1/SREBP1 and SREBF2/SREBP2. At high sterol concentrations, formation of a ternary complex with INSIG (INSIG1 or INSIG2) leads to mask the ER export signal in SCAP, promoting retention of the complex in the endoplasmic reticulum. Low sterol concentrations trigger release of INSIG, a conformational change in the SSD domain of SCAP, unmasking of the ER export signal, promoting recruitment into COPII-coated vesicles and transport of the SCAP-SREBP to the Golgi: in the Golgi, SREBPs are then processed, releasing the transcription factor fragment of SREBPs from the membrane, its import into the nucleus and up-regulation of LDLR, INSIG1 and the mevalonate pathway. Binds cholesterol via its SSD domain. The sequence is that of Sterol regulatory element-binding protein cleavage-activating protein from Bos taurus (Bovine).